Here is a 485-residue protein sequence, read N- to C-terminus: MTITPQHLIALLPLLIVGLTVVVVMLSIAWRRNHFLNATLSVIGLNAALVSLWFVGQAGAMDVTPLMRVDGFAMLYTGLVLLASLATCTFAYPWLEGYNDNQEEFYLLVLIASLGGILLANANHLAALFLGIELISLPLFGLIGYAFRQKRSLEASIKYTILSAAASSFLLFGMALVYAQSGNLSFEALGKSLGDGMLHEPLLLAGFGLMIVGLGFKLSLAPFHLWTPDVYQGAPAPVSTFLATASKIAIFGVVMRLFLYAPVGDSEAVRVVLGIIAFASIIFGNLMALSQTNIKRLLGYSSISHLGYLLVALIALQSGEMSMEAVGVYLAGYLFSSLGAFGVVSLMSSPFRGPDADSLYSYRGLFWHRPVLAAVMTVMMLSLAGIPMTLGFIGKFYVLAVGVQASLWWLVAAVVVGSAIGLYYYLRVAVSLYLHAPQQPGRDAPTNWQYSAGGIVVLISALLVLVLGVWPQPLISLVQLAMPLM.

Helical transmembrane passes span 8–28 (LIALLPLLIVGLTVVVVMLSI), 35–55 (FLNATLSVIGLNAALVSLWFV), 71–91 (GFAMLYTGLVLLASLATCTFA), 105–125 (FYLLVLIASLGGILLANANHL), 127–147 (ALFLGIELISLPLFGLIGYAF), 159–179 (YTILSAAASSFLLFGMALVYA), 203–223 (LLAGFGLMIVGLGFKLSLAPF), 235–255 (PAPVSTFLATASKIAIFGVVM), 271–291 (VVLGIIAFASIIFGNLMALSQ), 297–317 (LLGYSSISHLGYLLVALIALQ), 326–346 (VGVYLAGYLFSSLGAFGVVSL), 373–393 (AAVMTVMMLSLAGIPMTLGFI), 408–430 (WWLVAAVVVGSAIGLYYYLRVAV), and 455–475 (IVVLISALLVLVLGVWPQPLI).

Belongs to the complex I subunit 2 family. In terms of assembly, NDH-1 is composed of 13 different subunits. Subunits NuoA, H, J, K, L, M, N constitute the membrane sector of the complex.

The protein resides in the cell inner membrane. The enzyme catalyses a quinone + NADH + 5 H(+)(in) = a quinol + NAD(+) + 4 H(+)(out). Its function is as follows. NDH-1 shuttles electrons from NADH, via FMN and iron-sulfur (Fe-S) centers, to quinones in the respiratory chain. The immediate electron acceptor for the enzyme in this species is believed to be ubiquinone. Couples the redox reaction to proton translocation (for every two electrons transferred, four hydrogen ions are translocated across the cytoplasmic membrane), and thus conserves the redox energy in a proton gradient. The protein is NADH-quinone oxidoreductase subunit N of Salmonella paratyphi C (strain RKS4594).